The primary structure comprises 571 residues: Chaperonin GroEL 1 (571 aa).

Residues 29 to 32, Lys50, 86 to 90, Gly416, and Asp498 each bind ATP; these read TLGP and DGTTT.

The protein belongs to the chaperonin (HSP60) family. As to quaternary structure, forms a cylinder of 14 subunits composed of two heptameric rings stacked back-to-back. Interacts with the co-chaperonin GroES.

It is found in the cytoplasm. It catalyses the reaction ATP + H2O + a folded polypeptide = ADP + phosphate + an unfolded polypeptide.. Functionally, together with its co-chaperonin GroES, plays an essential role in assisting protein folding. The GroEL-GroES system forms a nano-cage that allows encapsulation of the non-native substrate proteins and provides a physical environment optimized to promote and accelerate protein folding. The protein is Chaperonin GroEL 1 of Rhodopirellula baltica (strain DSM 10527 / NCIMB 13988 / SH1).